Consider the following 357-residue polypeptide: UPF0283 membrane protein HSM_0945 (357 aa).

The next 3 membrane-spanning stretches (helical) occupy residues 67 to 87 (LMAT…QWLV), 96 to 116 (IAFV…GTII), and 213 to 233 (AVES…MFFI).

The protein belongs to the UPF0283 family.

The protein localises to the cell inner membrane. This Histophilus somni (strain 2336) (Haemophilus somnus) protein is UPF0283 membrane protein HSM_0945.